A 966-amino-acid chain; its full sequence is MNRFNGLCKVCSERRYRQITIRRGKDGFGFTICCDSPVRVQAVDSGGPAERAGLQQLDTVLQLNERPVEHWKCVELAHEIRSCPSEIILLVWRVVPQIKPGPDGGVLRRASCKSTHDLLSPPNKREKNCTHGAPVRPEQRHSCHLVCDSSDGLLLGGWERYTEVGKRSGQHTLPALSRTTTPTDPNYIILAPLNPGSQLLRPVYQEDTIPEEPGTTTKGKSYTGLGKKSRLMKTVQTMKGHSNYQDCSALRPHIPHSSYGTYVTLAPKVLVFPVFVQPLDLCNPARTLLLSEELLLYEGRNKTSQVTLFAYSDLLLFTKEEEPGRCDVLRNPLYLQSVKLQEGSSEDLKFCVLYLAEKAECLFTLEAHSQEQKKRVCWCLSENIAKQQQLAAPPTERKMFETEADEKEMPLVEGKGPGAEEPAPSKNPSPGQELPPGQDLPPSKDPSPSQELPAGQDLPPSKDPSPSQELPAGQDLPPSKDPSPSQELPVGQDLPPRKDSSGQEAAPGPESPSSEDIATCPKPPQSPETSTSKDSPPGQGSSPTTELPSCQGLPAGQESTSQDPLLSQEPPVIPESSASVQKRLPSQESPSSLGSLPEKDLAEQTISSGEPPVATGAVLPASRPNFVIPEVRLDNAYSQLDGAHGGSSGEDEDAEEGEEGGEGEEDEEDDTSDDNYGDRSEAKRSSLIETGQGAEGGFSLRVQNSLRRRTHSEGSLLQESRGPCFASDTTLHCSDGEGATSTWAIPSPRTLKKELGRNGGSMHHLSLFFTGHRKMSGTDLTECDEASRKRKSKNIAKDMKNKLAIFRRRNESPGAQPASKTDKTTKSFKPTSEEALKWSESLEKLLLHKYGLEVFQAFLRTEFSEENLEFWLACEDFKKVKSQSKMAAKAKKIFAEFIAIQACKEVNLDSYTREHTKENLQSITRGCFDLAQKRIFGLMEKDSYPRFLRSDLYLDLINQKKMSPPL.

The PDZ domain occupies Gln-18–Val-95. The interval Thr-115–Val-135 is disordered. At Arg-167 the chain carries Omega-N-methylarginine. Disordered regions lie at residues Glu-403–Val-618 and Tyr-637–Asn-704. 2 stretches are compositionally biased toward polar residues: residues Pro-527 to Pro-548 and Ser-576 to Gly-594. Positions Gly-649–Asn-675 are enriched in acidic residues. The segment covering Tyr-676–Ser-686 has biased composition (basic and acidic residues). A phosphoserine mark is found at Ser-712, Ser-715, Ser-747, and Ser-776. The segment at Phe-806–Pro-830 is disordered. Over residues Lys-820 to Pro-830 the composition is skewed to basic and acidic residues. The RGS domain occupies Ser-841–Leu-966.

Binds the GNB1-GNG2 heterodimer. Binds EFNB1 and EFNB2. Phosphorylated by cyclic GMP-dependent protein kinase. In terms of processing, ISGylated. As to expression, detected in embryos from E8.5-16.5 in cortical ventricular zone, dorsal root ganglia and cerebellar primordia. Isoform 3 is detected in testis and in spermatocytes from newborn mice. Levels increase and reach a maximum after 21 days; after this they decrease again. Long isoforms are widely expressed.

Its subcellular location is the cytoplasm. The protein resides in the cell membrane. The protein localises to the nucleus. Its function is as follows. Down-regulates signaling from heterotrimeric G-proteins by increasing the GTPase activity of the alpha subunits, thereby driving them into their inactive GDP-bound form. Down-regulates G-protein-mediated release of inositol phosphates and activation of MAP kinases. In Mus musculus (Mouse), this protein is Regulator of G-protein signaling 3 (Rgs3).